The primary structure comprises 176 residues: Small ribosomal subunit protein uS8c (176 aa).

This sequence belongs to the universal ribosomal protein uS8 family. Part of the 30S ribosomal subunit.

It is found in the plastid. The protein localises to the chloroplast. In terms of biological role, one of the primary rRNA binding proteins, it binds directly to 16S rRNA central domain where it helps coordinate assembly of the platform of the 30S subunit. This Stigeoclonium helveticum (Green alga) protein is Small ribosomal subunit protein uS8c (rps8).